Consider the following 185-residue polypeptide: Elongation factor P (185 aa).

Belongs to the elongation factor P family.

The protein resides in the cytoplasm. It functions in the pathway protein biosynthesis; polypeptide chain elongation. In terms of biological role, involved in peptide bond synthesis. Stimulates efficient translation and peptide-bond synthesis on native or reconstituted 70S ribosomes in vitro. Probably functions indirectly by altering the affinity of the ribosome for aminoacyl-tRNA, thus increasing their reactivity as acceptors for peptidyl transferase. In Nostoc sp. (strain PCC 7120 / SAG 25.82 / UTEX 2576), this protein is Elongation factor P (efp).